Reading from the N-terminus, the 335-residue chain is Lipoyl synthase (335 aa).

The [4Fe-4S] cluster site is built by C55, C60, C66, C81, C85, C88, and S292. The Radical SAM core domain occupies 67–281; it reads WEDREATFLI…SKAAEEIGFL (215 aa).

It belongs to the radical SAM superfamily. Lipoyl synthase family. [4Fe-4S] cluster is required as a cofactor.

The protein resides in the cytoplasm. The enzyme catalyses [[Fe-S] cluster scaffold protein carrying a second [4Fe-4S](2+) cluster] + N(6)-octanoyl-L-lysyl-[protein] + 2 oxidized [2Fe-2S]-[ferredoxin] + 2 S-adenosyl-L-methionine + 4 H(+) = [[Fe-S] cluster scaffold protein] + N(6)-[(R)-dihydrolipoyl]-L-lysyl-[protein] + 4 Fe(3+) + 2 hydrogen sulfide + 2 5'-deoxyadenosine + 2 L-methionine + 2 reduced [2Fe-2S]-[ferredoxin]. The protein operates within protein modification; protein lipoylation via endogenous pathway; protein N(6)-(lipoyl)lysine from octanoyl-[acyl-carrier-protein]: step 2/2. Functionally, catalyzes the radical-mediated insertion of two sulfur atoms into the C-6 and C-8 positions of the octanoyl moiety bound to the lipoyl domains of lipoate-dependent enzymes, thereby converting the octanoylated domains into lipoylated derivatives. The protein is Lipoyl synthase of Kocuria rhizophila (strain ATCC 9341 / DSM 348 / NBRC 103217 / DC2201).